Reading from the N-terminus, the 184-residue chain is Ras-related protein Rap-1b (184 aa).

GTP is bound at residue 10–17 (GSGGVGKS). The Effector region motif lies at 32 to 40 (YDPTIEDSY). Residues 57 to 61 (DTAGT) and 116 to 119 (NKCD) each bind GTP. Cys181 bears the Cysteine methyl ester mark. Cys181 carries S-geranylgeranyl cysteine lipidation. Positions 182–184 (HLL) are cleaved as a propeptide — removed in mature form.

This sequence belongs to the small GTPase superfamily. Ras family.

It is found in the cell membrane. Its subcellular location is the cytoplasm. The protein localises to the cytosol. The protein resides in the cell junction. The catalysed reaction is GTP + H2O = GDP + phosphate + H(+). Probable GTP-binding protein that possesses GTPase activity. May play a role in endothelial cell polarity and endothelial barrier function. The chain is Ras-related protein Rap-1b (rap1b) from Xenopus laevis (African clawed frog).